We begin with the raw amino-acid sequence, 341 residues long: Coiled-coil domain-containing protein 86 (341 aa).

The segment at Met-1 to Val-341 is disordered. The residue at position 18 (Ser-18) is a Phosphoserine. Positions Glu-26–Ser-49 are enriched in basic and acidic residues. Position 59 is a phosphoserine (Ser-59). Residues Pro-64 to Pro-73 are compositionally biased toward low complexity. Residue Thr-66 is modified to Phosphothreonine. Phosphoserine is present on residues Ser-67, Ser-70, Ser-81, Ser-92, Ser-103, Ser-114, and Ser-124. Residues Ala-105–Ser-114 show a composition bias toward polar residues. A compositionally biased stretch (basic and acidic residues) spans Glu-130–Ile-139. A phosphoserine mark is found at Ser-142, Ser-169, Ser-170, and Ser-200. Residues Gly-219–Phe-235 are compositionally biased toward basic residues. Residues Glu-254–Glu-298 are compositionally biased toward basic and acidic residues. Residues Ala-261–Arg-304 are a coiled coil. Over residues Ala-307–Leu-317 the composition is skewed to basic residues. Arg-323 carries the post-translational modification Citrulline.

In terms of processing, citrullinated by PADI4.

The protein resides in the nucleus. It localises to the chromosome. Its subcellular location is the nucleolus. Required for proper chromosome segregation during mitosis and error-free mitotic progression. This is Coiled-coil domain-containing protein 86 from Rattus norvegicus (Rat).